Consider the following 578-residue polypeptide: A-type ATP synthase subunit A (578 aa).

Residue 228–235 coordinates ATP; that stretch reads GPFGSGKT.

This sequence belongs to the ATPase alpha/beta chains family. As to quaternary structure, has multiple subunits with at least A(3), B(3), C, D, E, F, H, I and proteolipid K(x).

The protein localises to the cell membrane. The enzyme catalyses ATP + H2O + 4 H(+)(in) = ADP + phosphate + 5 H(+)(out). Functionally, component of the A-type ATP synthase that produces ATP from ADP in the presence of a proton gradient across the membrane. The A chain is the catalytic subunit. This chain is A-type ATP synthase subunit A, found in Methanosarcina acetivorans (strain ATCC 35395 / DSM 2834 / JCM 12185 / C2A).